Reading from the N-terminus, the 264-residue chain is S-adenosylmethionine decarboxylase proenzyme (264 aa).

Serine 112 acts as the Schiff-base intermediate with substrate; via pyruvic acid in catalysis. Serine 112 is subject to Pyruvic acid (Ser); by autocatalysis. The Proton acceptor; for processing activity role is filled by histidine 117. Residue cysteine 140 is the Proton donor; for catalytic activity of the active site.

It belongs to the prokaryotic AdoMetDC family. Type 2 subfamily. As to quaternary structure, heterooctamer of four alpha and four beta chains arranged as a tetramer of alpha/beta heterodimers. Requires pyruvate as cofactor. Post-translationally, is synthesized initially as an inactive proenzyme. Formation of the active enzyme involves a self-maturation process in which the active site pyruvoyl group is generated from an internal serine residue via an autocatalytic post-translational modification. Two non-identical subunits are generated from the proenzyme in this reaction, and the pyruvate is formed at the N-terminus of the alpha chain, which is derived from the carboxyl end of the proenzyme. The post-translation cleavage follows an unusual pathway, termed non-hydrolytic serinolysis, in which the side chain hydroxyl group of the serine supplies its oxygen atom to form the C-terminus of the beta chain, while the remainder of the serine residue undergoes an oxidative deamination to produce ammonia and the pyruvoyl group blocking the N-terminus of the alpha chain.

The enzyme catalyses S-adenosyl-L-methionine + H(+) = S-adenosyl 3-(methylsulfanyl)propylamine + CO2. Its pathway is amine and polyamine biosynthesis; S-adenosylmethioninamine biosynthesis; S-adenosylmethioninamine from S-adenosyl-L-methionine: step 1/1. In terms of biological role, catalyzes the decarboxylation of S-adenosylmethionine to S-adenosylmethioninamine (dcAdoMet), the propylamine donor required for the synthesis of the polyamines spermine and spermidine from the diamine putrescine. The protein is S-adenosylmethionine decarboxylase proenzyme of Salmonella gallinarum (strain 287/91 / NCTC 13346).